Reading from the N-terminus, the 456-residue chain is Probable hexose phosphate transport protein (456 aa).

Helical transmembrane passes span 34–54 (IFYSMFLGYVFFYFTRKSFTF), 70–90 (LGIIGSTLYITYGISKFVSGV), 113–133 (IFFGLSSTIPLFVLFWGINGW), 161–181 (VWSTSHNIGGALIPVLTGVAI), 185–205 (GWRGAMFIPGIICIIMGFILI), 257–277 (YVLSNKWLWFLSFASFFIYVV), 302–322 (LCVSLFEIGGLFGMLLAGWLS), 331–351 (GPMNVVFSLGLLVSILGLWGT), 363–383 (FLFIIGFFLFGPQMMIGLAAA), 394–414 (ASGFTGWFAYFGAAFAGYPLG), and 421–441 (GWHGFFVALLACALIALILFL).

This sequence belongs to the major facilitator superfamily. Organophosphate:Pi antiporter (OPA) (TC 2.A.1.4) family.

The protein resides in the cell membrane. Functionally, transport protein for sugar phosphate uptake. This Chlamydia trachomatis serovar D (strain ATCC VR-885 / DSM 19411 / UW-3/Cx) protein is Probable hexose phosphate transport protein.